A 261-amino-acid chain; its full sequence is Acyl-[acyl-carrier-protein]--UDP-N-acetylglucosamine O-acyltransferase (261 aa).

The protein belongs to the transferase hexapeptide repeat family. LpxA subfamily. As to quaternary structure, homotrimer.

The protein resides in the cytoplasm. It carries out the reaction a (3R)-hydroxyacyl-[ACP] + UDP-N-acetyl-alpha-D-glucosamine = a UDP-3-O-[(3R)-3-hydroxyacyl]-N-acetyl-alpha-D-glucosamine + holo-[ACP]. It participates in glycolipid biosynthesis; lipid IV(A) biosynthesis; lipid IV(A) from (3R)-3-hydroxytetradecanoyl-[acyl-carrier-protein] and UDP-N-acetyl-alpha-D-glucosamine: step 1/6. In terms of biological role, involved in the biosynthesis of lipid A, a phosphorylated glycolipid that anchors the lipopolysaccharide to the outer membrane of the cell. The polypeptide is Acyl-[acyl-carrier-protein]--UDP-N-acetylglucosamine O-acyltransferase (Trichlorobacter lovleyi (strain ATCC BAA-1151 / DSM 17278 / SZ) (Geobacter lovleyi)).